A 177-amino-acid polypeptide reads, in one-letter code: Large ribosomal subunit protein uL6 (177 aa).

It belongs to the universal ribosomal protein uL6 family. Part of the 50S ribosomal subunit.

In terms of biological role, this protein binds to the 23S rRNA, and is important in its secondary structure. It is located near the subunit interface in the base of the L7/L12 stalk, and near the tRNA binding site of the peptidyltransferase center. This is Large ribosomal subunit protein uL6 from Aliivibrio salmonicida (strain LFI1238) (Vibrio salmonicida (strain LFI1238)).